A 331-amino-acid polypeptide reads, in one-letter code: Sulfate/thiosulfate import ATP-binding protein CysA (331 aa).

One can recognise an ABC transporter domain in the interval 2–232 (ITVTNARKNY…PANEFVMSFL (231 aa)). 34–41 (GPSGSGKS) provides a ligand contact to ATP.

It belongs to the ABC transporter superfamily. Sulfate/tungstate importer (TC 3.A.1.6) family. In terms of assembly, the complex is composed of two ATP-binding proteins (CysA), two transmembrane proteins (CysT and CysW) and a solute-binding protein (CysP).

The protein localises to the cell membrane. The enzyme catalyses sulfate(out) + ATP + H2O = sulfate(in) + ADP + phosphate + H(+). It carries out the reaction thiosulfate(out) + ATP + H2O = thiosulfate(in) + ADP + phosphate + H(+). In terms of biological role, part of the ABC transporter complex CysAWTP involved in sulfate/thiosulfate import. Responsible for energy coupling to the transport system. The polypeptide is Sulfate/thiosulfate import ATP-binding protein CysA (Nocardia farcinica (strain IFM 10152)).